A 146-amino-acid polypeptide reads, in one-letter code: uncharacterized protein (146 aa).

The N-terminal stretch at 1–24 (MVIYYGKKNCTLLLLLFILCNIYS) is a signal peptide. Asparagine 99 and asparagine 106 each carry an N-linked (GlcNAc...) asparagine glycan.

This is an uncharacterized protein from Saccharomyces cerevisiae (strain ATCC 204508 / S288c) (Baker's yeast).